The primary structure comprises 267 residues: 3-methyl-2-oxobutanoate hydroxymethyltransferase (267 aa).

Residues Asp42 and Asp86 each coordinate Mg(2+). Residues Asp42–Ser43, Asp86, and Lys116 contribute to the 3-methyl-2-oxobutanoate site. Glu118 lines the Mg(2+) pocket. The active-site Proton acceptor is the Glu185.

It belongs to the PanB family. Homodecamer; pentamer of dimers. Mg(2+) is required as a cofactor.

The protein localises to the cytoplasm. The enzyme catalyses 3-methyl-2-oxobutanoate + (6R)-5,10-methylene-5,6,7,8-tetrahydrofolate + H2O = 2-dehydropantoate + (6S)-5,6,7,8-tetrahydrofolate. It functions in the pathway cofactor biosynthesis; (R)-pantothenate biosynthesis; (R)-pantoate from 3-methyl-2-oxobutanoate: step 1/2. Its function is as follows. Catalyzes the reversible reaction in which hydroxymethyl group from 5,10-methylenetetrahydrofolate is transferred onto alpha-ketoisovalerate to form ketopantoate. The chain is 3-methyl-2-oxobutanoate hydroxymethyltransferase from Parasynechococcus marenigrum (strain WH8102).